The primary structure comprises 410 residues: Argininosuccinate synthase (410 aa).

ATP contacts are provided by residues 13–21 (AYSGGLDTS) and A40. Residues Y91 and S96 each coordinate L-citrulline. An ATP-binding site is contributed by G121. T123, N127, and D128 together coordinate L-aspartate. N127 contacts L-citrulline. The L-citrulline site is built by R131, S182, S191, E267, and Y279.

This sequence belongs to the argininosuccinate synthase family. Type 1 subfamily. As to quaternary structure, homotetramer.

The protein resides in the cytoplasm. It carries out the reaction L-citrulline + L-aspartate + ATP = 2-(N(omega)-L-arginino)succinate + AMP + diphosphate + H(+). The protein operates within amino-acid biosynthesis; L-arginine biosynthesis; L-arginine from L-ornithine and carbamoyl phosphate: step 2/3. The polypeptide is Argininosuccinate synthase (Maricaulis maris (strain MCS10) (Caulobacter maris)).